A 505-amino-acid chain; its full sequence is Maturase K (505 aa).

This sequence belongs to the intron maturase 2 family. MatK subfamily.

It is found in the plastid. The protein resides in the chloroplast. Usually encoded in the trnK tRNA gene intron. Probably assists in splicing its own and other chloroplast group II introns. In Rhizophora stylosa (Bakau), this protein is Maturase K.